We begin with the raw amino-acid sequence, 202 residues long: Na(+)-translocating NADH-quinone reductase subunit E (202 aa).

The next 6 membrane-spanning stretches (helical) occupy residues 11–31 (SVFI…FLAV), 35–55 (VTTA…SVPA), 79–99 (LSFL…QILE), 114–134 (GIFL…AFMV), 144–164 (LVFG…LAAV), and 180–200 (LGIT…FSGV).

It belongs to the NqrDE/RnfAE family. Composed of six subunits; NqrA, NqrB, NqrC, NqrD, NqrE and NqrF.

The protein localises to the cell inner membrane. It carries out the reaction a ubiquinone + n Na(+)(in) + NADH + H(+) = a ubiquinol + n Na(+)(out) + NAD(+). Its function is as follows. NQR complex catalyzes the reduction of ubiquinone-1 to ubiquinol by two successive reactions, coupled with the transport of Na(+) ions from the cytoplasm to the periplasm. NqrA to NqrE are probably involved in the second step, the conversion of ubisemiquinone to ubiquinol. In Shewanella denitrificans (strain OS217 / ATCC BAA-1090 / DSM 15013), this protein is Na(+)-translocating NADH-quinone reductase subunit E.